A 309-amino-acid polypeptide reads, in one-letter code: Protein FdhE homolog (309 aa).

The protein belongs to the FdhE family.

It localises to the cytoplasm. Its function is as follows. Necessary for formate dehydrogenase activity. This is Protein FdhE homolog from Citrobacter koseri (strain ATCC BAA-895 / CDC 4225-83 / SGSC4696).